Reading from the N-terminus, the 235-residue chain is Large ribosomal subunit protein uL1 (235 aa).

The protein belongs to the universal ribosomal protein uL1 family. As to quaternary structure, part of the 50S ribosomal subunit.

Its function is as follows. Binds directly to 23S rRNA. The L1 stalk is quite mobile in the ribosome, and is involved in E site tRNA release. Functionally, protein L1 is also a translational repressor protein, it controls the translation of the L11 operon by binding to its mRNA. In Renibacterium salmoninarum (strain ATCC 33209 / DSM 20767 / JCM 11484 / NBRC 15589 / NCIMB 2235), this protein is Large ribosomal subunit protein uL1.